A 360-amino-acid chain; its full sequence is MTELVTLETQLMAEVAAATDEQSIEAVRVAALGKKGSVSELLKTLGSMSPEERQTRGAAINALKNSVTDAINARKGALKDAAIDAKLKAETVDVSLPVRSSPAERGRIHPISQIVDEITAIFGDMGFSIAEGPDVETDYYNFTALNFPEGHPAREMHDTFFFQPDEKGERKVLRTHTSPVQIRTMEAQKPPIRIIIPGKTYRQDSDATHSPMFHQVEGLVIDKTANVANIRWVLEEFCKTFFEVDNVTMRFRPSFFPFTEPSFEVDIQCDRSGPIVKFGEGTDWMEILGCGMVHPNVLRHGGLDPDEYQGFAWGMGLDRIAMLKYGMPDLRDFFNADVRWMNHYGFRPLDMPTLFGGLSA.

Glu260 is a Mg(2+) binding site.

It belongs to the class-II aminoacyl-tRNA synthetase family. Phe-tRNA synthetase alpha subunit type 1 subfamily. As to quaternary structure, tetramer of two alpha and two beta subunits. The cofactor is Mg(2+).

It is found in the cytoplasm. The catalysed reaction is tRNA(Phe) + L-phenylalanine + ATP = L-phenylalanyl-tRNA(Phe) + AMP + diphosphate + H(+). In Rhizobium rhizogenes (strain K84 / ATCC BAA-868) (Agrobacterium radiobacter), this protein is Phenylalanine--tRNA ligase alpha subunit.